A 1199-amino-acid chain; its full sequence is MALSEEPAAGAAEDPVEDPVEDAGEDAALACGAALESFGESAETRELLGHLPAVLADRSAREGALERFRVIMDKYQEQPHLLDPHLEWMLNLLLEFVQNKTSPADLVHLAFKFLYIISKVRGYKTFLRLFPHEVADVQPVLDMFTNQNPKDHETWETRYMLLLWLSVTCLIPFDFSRLDGNLSQPGQERASTMDRILQVAESYLVVSDKARDAAAVLVSKFVTRPDVKQKKMASFLDWSLCTLARSSFQTIEGVIAMDGTLQALAQIFKHGKREDCLPYAATVLQCLDSCRLPDSNQTLLRKLGVKLVQRLGLTFLKPQVAKWRYQRGCRSLAESLQHSIQNPREPVTQAETPDSDGQDDVPEEVESVIEQLLVGLKDKDTIVRWSAAKGIGRMAGRLPKELADDVTGSVLDCFSFQETDSAWHGGCLALAELGRRGLLLPSRLSDVVPVILRALTYEEKRGACSVGSNVRDAACYVCWAFARAYEPQELKPFVAAISSALVIATVFDRDVNCRRAASAAFQENVGRQGTFPHGIDILTTADYFAVGNRSNCFLVISMFIAGFPEYTQPMIEHLVTMKVGHWDGTIRELSAKALRNLAQRAPEHTAREVFPRLLSMTQSPDLHTRHGAVLACAEVARSLHTLATQQGRPVSDFLDEKAMHGLKQIHQQLYDRQLYRGLGGELMRQAVCILIENVALSKMPFRGDAVIDGWQWLINDTLKNLHLISSHSRQHIKEAAVSALAALCSEYHAQEPGEAEAAAQEELVKLYLAELQSPEEMTRCGCALALGALPAFFLKGRLRQVLAGLRAVTHISPKDVSFAEARRDALKAISRICQTVGVRAEGPPDEAVCRENVSQIYCTLLDCLKDYTTDSRGDVGAWVREAAMTSLMDLTLLLGRNQPELIEAPLCQQLMCCLAQQASEKIDRFRAHAARVFLALLHADSPAIPHVPARPELERLFPRAAVASVNWGAPSQAFPRMARLLGLPAYRYHVLLGLAVSVGGLTESTVRYSTQGLFEYMKEIQNDPAALEDFGGTLLQVFEDNLLNDRVSVPLLKTLDQMLANGCFDIFTAQENHPFCVKLLALCKEEIKKSKDVQKLRSSIAVFCGLVQFPGDVRRKVLLQLFLLLCHPFPVIRKNTASQVYEMVLTYDVVPTAVLDEVMAVLSSTAWDAELPVVRAQRNRLCDLLGVPRPQLVPKPAVR.

Disordered regions lie at residues 1-23 (MALS…VEDA) and 337-361 (QHSI…QDDV). Over residues 14 to 23 (DPVEDPVEDA) the composition is skewed to acidic residues. 4 HEAT repeats span residues 368-406 (VIEQ…ADDV), 603-639 (EHTA…ARSL), 757-793 (AAAQ…PAFF), and 1111-1147 (GDVR…VLTY).

Belongs to the TBCD family. Found in a complex with at least ARL2, PPP2CB, PPP2R1A, PPP2R2A, PPP2R5E and TBCD. Interacts with PPP2CB. Part of a supercomplex made of cofactors A to E. Cofactors A and D function by capturing and stabilizing tubulin in a quasi-native conformation. Cofactor E binds to the cofactor D-tubulin complex; interaction with cofactor C then causes the release of tubulin polypeptides that are committed to the native state. Interacts with ARL2; interaction is enhanced with the GDP-bound form of ARL2. Does not interact with ARL3, ARL4A and ARL4D. Interacts with beta tubulin. Interacts with TBCE.

Its subcellular location is the cell junction. The protein localises to the tight junction. It localises to the lateral cell membrane. It is found in the cytoplasm. The protein resides in the adherens junction. Its subcellular location is the cytoskeleton. The protein localises to the microtubule organizing center. It localises to the centrosome. Functionally, tubulin-folding protein implicated in the first step of the tubulin folding pathway and required for tubulin complex assembly. Involved in the regulation of microtubule polymerization or depolymerization, it modulates microtubule dynamics by capturing GTP-bound beta-tubulin (TUBB). Its ability to interact with beta tubulin is regulated via its interaction with ARL2. Acts as a GTPase-activating protein (GAP) for ARL2. Induces microtubule disruption in absence of ARL2. Increases degradation of beta tubulin, when overexpressed in polarized cells. Promotes epithelial cell detachment, a process antagonized by ARL2. Induces tight adherens and tight junctions disassembly at the lateral cell membrane. Required for correct assembly and maintenance of the mitotic spindle, and proper progression of mitosis. Involved in neuron morphogenesis. The sequence is that of Tubulin-specific chaperone D (TBCD) from Bos taurus (Bovine).